Reading from the N-terminus, the 618-residue chain is Grainyhead-like protein 1 homolog (618 aa).

Residues Met-1–Ser-91 form a transcription activation region. The segment covering Arg-74–Lys-92 has biased composition (basic and acidic residues). The segment at Arg-74–Asn-94 is disordered. Thr-208 bears the Phosphothreonine mark. Positions Ser-248 to Ile-474 constitute a Grh/CP2 DB domain. Interaction with DNA stretches follow at residues Thr-380 to Lys-389 and Arg-427 to Arg-430.

It belongs to the grh/CP2 family. Grainyhead subfamily. As to quaternary structure, binds DNA as homodimer. Homodimer, also forms heterodimers with GRHL2 or GRHL3. Methylation at Arg-9 and Lys-116 may be involved in regulating transcriptional activation.

The protein localises to the nucleus. Functionally, transcription factor involved in epithelial development. Binds directly to the consensus DNA sequence 5'-AACCGGTT-3'. Important regulator of DSG1 in the context of hair anchorage and epidermal differentiation, participates in the maintenance of the skin barrier. There is no genetic interaction with GRHL3, nor functional cooperativity due to diverse target gene selectivity during epithelia development. May play a role in regulating glucose homeostasis and insulin signaling. The protein is Grainyhead-like protein 1 homolog (GRHL1) of Pongo abelii (Sumatran orangutan).